The primary structure comprises 452 residues: GTPase Der (452 aa).

2 EngA-type G domains span residues 4–169 (PVVA…PPAA) and 177–352 (IKVA…ESHR). GTP-binding positions include 10–17 (GRPNVGKS), 57–61 (DTGGL), 120–123 (NKCE), 183–190 (GRPNVGKS), 230–234 (DTAGI), and 295–298 (NKWD). One can recognise a KH-like domain in the interval 353–438 (RRVSTSVIND…PIRLIWRGKP (86 aa)).

It belongs to the TRAFAC class TrmE-Era-EngA-EngB-Septin-like GTPase superfamily. EngA (Der) GTPase family. As to quaternary structure, associates with the 50S ribosomal subunit.

In terms of biological role, GTPase that plays an essential role in the late steps of ribosome biogenesis. The protein is GTPase Der of Microcystis aeruginosa (strain NIES-843 / IAM M-2473).